The chain runs to 398 residues: 4-hydroxy-3-methylbut-2-en-1-yl diphosphate synthase (ferredoxin) (398 aa).

Residues Cys306, Cys309, Cys340, and Glu347 each contribute to the [4Fe-4S] cluster site.

The protein belongs to the IspG family. It depends on [4Fe-4S] cluster as a cofactor.

The enzyme catalyses (2E)-4-hydroxy-3-methylbut-2-enyl diphosphate + 2 oxidized [2Fe-2S]-[ferredoxin] + H2O = 2-C-methyl-D-erythritol 2,4-cyclic diphosphate + 2 reduced [2Fe-2S]-[ferredoxin] + H(+). The protein operates within isoprenoid biosynthesis; isopentenyl diphosphate biosynthesis via DXP pathway; isopentenyl diphosphate from 1-deoxy-D-xylulose 5-phosphate: step 5/6. Functionally, converts 2C-methyl-D-erythritol 2,4-cyclodiphosphate (ME-2,4cPP) into 1-hydroxy-2-methyl-2-(E)-butenyl 4-diphosphate. The protein is 4-hydroxy-3-methylbut-2-en-1-yl diphosphate synthase (ferredoxin) of Parasynechococcus marenigrum (strain WH8102).